A 317-amino-acid chain; its full sequence is Methionyl-tRNA formyltransferase (317 aa).

Residue 110–113 (SLLP) participates in (6S)-5,6,7,8-tetrahydrofolate binding. The disordered stretch occupies residues 292–317 (RMKGEDFVRGKNVQPGDVLGEANEEN).

Belongs to the Fmt family.

The enzyme catalyses L-methionyl-tRNA(fMet) + (6R)-10-formyltetrahydrofolate = N-formyl-L-methionyl-tRNA(fMet) + (6S)-5,6,7,8-tetrahydrofolate + H(+). Its function is as follows. Attaches a formyl group to the free amino group of methionyl-tRNA(fMet). The formyl group appears to play a dual role in the initiator identity of N-formylmethionyl-tRNA by promoting its recognition by IF2 and preventing the misappropriation of this tRNA by the elongation apparatus. This chain is Methionyl-tRNA formyltransferase, found in Bacillus velezensis (strain DSM 23117 / BGSC 10A6 / LMG 26770 / FZB42) (Bacillus amyloliquefaciens subsp. plantarum).